A 38-amino-acid chain; its full sequence is DNA binding protein VP8 (38 aa).

The span at 1–16 (MKRKPMSRKASQKTFK) shows a compositional bias: basic residues. A disordered region spans residues 1–38 (MKRKPMSRKASQKTFKKNTGVQRMNHLNPRAMRGGIRL).

The protein belongs to the microviridae J protein family.

Its subcellular location is the virion. The protein resides in the host cytoplasm. Functionally, mediates ssDNA packaging into virion, it locates to the internal surface of the capsid, thereby displacing the internal scaffolding protein VP3 during virion formation. Additionally, protein VP8 plays a role in viral attachment to the host cell. The polypeptide is DNA binding protein VP8 (Bdellovibrio phage phiMH2K (Bacteriophage phiMH2K)).